The sequence spans 231 residues: Large ribosomal subunit protein uL1 (231 aa).

Belongs to the universal ribosomal protein uL1 family. As to quaternary structure, part of the 50S ribosomal subunit.

Binds directly to 23S rRNA. The L1 stalk is quite mobile in the ribosome, and is involved in E site tRNA release. Its function is as follows. Protein L1 is also a translational repressor protein, it controls the translation of the L11 operon by binding to its mRNA. The chain is Large ribosomal subunit protein uL1 from Kosmotoga olearia (strain ATCC BAA-1733 / DSM 21960 / TBF 19.5.1).